We begin with the raw amino-acid sequence, 129 residues long: Small ribosomal subunit protein uS8 (129 aa).

Belongs to the universal ribosomal protein uS8 family. Part of the 30S ribosomal subunit.

In terms of biological role, one of the primary rRNA binding proteins, it binds directly to 16S rRNA central domain where it helps coordinate assembly of the platform of the 30S subunit. This chain is Small ribosomal subunit protein uS8, found in Thermoplasma acidophilum (strain ATCC 25905 / DSM 1728 / JCM 9062 / NBRC 15155 / AMRC-C165).